A 170-amino-acid chain; its full sequence is Zinc finger matrin-type protein 5 (170 aa).

The segment at 51-79 (EQNKRPCRKFLLTGQCDFGSNCRFSHMSE) adopts a C3H1-type zinc-finger fold. A disordered region spans residues 150–170 (PPSLRAPPPGGWPLQPRVQWG).

Component of the U11/U12 snRNPs that are part of the U12-type spliceosome. Not found in the major spliceosome.

The protein resides in the nucleus. This chain is Zinc finger matrin-type protein 5 (ZMAT5), found in Homo sapiens (Human).